Consider the following 581-residue polypeptide: Adenine deaminase (581 aa).

This sequence belongs to the metallo-dependent hydrolases superfamily. Adenine deaminase family. Mn(2+) is required as a cofactor.

It carries out the reaction adenine + H2O + H(+) = hypoxanthine + NH4(+). The protein is Adenine deaminase of Lysinibacillus sphaericus (strain C3-41).